Reading from the N-terminus, the 87-residue chain is Small ribosomal subunit protein bS18 (87 aa).

Belongs to the bacterial ribosomal protein bS18 family. As to quaternary structure, part of the 30S ribosomal subunit. Forms a tight heterodimer with protein bS6.

In terms of biological role, binds as a heterodimer with protein bS6 to the central domain of the 16S rRNA, where it helps stabilize the platform of the 30S subunit. This is Small ribosomal subunit protein bS18 from Oleidesulfovibrio alaskensis (strain ATCC BAA-1058 / DSM 17464 / G20) (Desulfovibrio alaskensis).